The primary structure comprises 73 residues: uncharacterized protein (73 aa).

The next 2 helical transmembrane spans lie at 7–27 and 47–67; these read LFSS…IPNL and YFGY…IIIL.

Its subcellular location is the cell membrane. This is an uncharacterized protein from Methanocaldococcus jannaschii (strain ATCC 43067 / DSM 2661 / JAL-1 / JCM 10045 / NBRC 100440) (Methanococcus jannaschii).